A 135-amino-acid polypeptide reads, in one-letter code: Large ribosomal subunit protein uL16c (135 aa).

Residues 1 to 17 (MLSPKRTRFRKQHRGRM) are compositionally biased toward basic residues. The disordered stretch occupies residues 1-21 (MLSPKRTRFRKQHRGRMKGVS).

The protein belongs to the universal ribosomal protein uL16 family. Part of the 50S ribosomal subunit.

The protein localises to the plastid. It localises to the chloroplast. The polypeptide is Large ribosomal subunit protein uL16c (Amborella trichopoda).